A 444-amino-acid chain; its full sequence is Divalent metal cation transporter MntH (444 aa).

The next 11 membrane-spanning stretches (helical) occupy residues 31–51, 68–88, 115–135, 146–166, 175–195, 212–232, 267–287, 303–323, 356–376, 381–401, and 413–433; these read GGHW…VSVG, FGYL…VLQG, LALW…EVIG, IPLT…LLLM, AFVM…IALA, VVTN…TVMP, VALM…AAVF, ALLA…VALL, LLTR…YGEA, LLVL…IPLV, and LVAP…IVGL.

This sequence belongs to the NRAMP family.

The protein resides in the cell inner membrane. In terms of biological role, h(+)-stimulated, divalent metal cation uptake system. This chain is Divalent metal cation transporter MntH, found in Xanthomonas campestris pv. campestris (strain ATCC 33913 / DSM 3586 / NCPPB 528 / LMG 568 / P 25).